Consider the following 366-residue polypeptide: Tetraacyldisaccharide 4'-kinase (366 aa).

An ATP-binding site is contributed by 51-58 (TVGGTGKT).

Belongs to the LpxK family.

It carries out the reaction a lipid A disaccharide + ATP = a lipid IVA + ADP + H(+). Its pathway is glycolipid biosynthesis; lipid IV(A) biosynthesis; lipid IV(A) from (3R)-3-hydroxytetradecanoyl-[acyl-carrier-protein] and UDP-N-acetyl-alpha-D-glucosamine: step 6/6. Transfers the gamma-phosphate of ATP to the 4'-position of a tetraacyldisaccharide 1-phosphate intermediate (termed DS-1-P) to form tetraacyldisaccharide 1,4'-bis-phosphate (lipid IVA). This chain is Tetraacyldisaccharide 4'-kinase, found in Phocaeicola vulgatus (strain ATCC 8482 / DSM 1447 / JCM 5826 / CCUG 4940 / NBRC 14291 / NCTC 11154) (Bacteroides vulgatus).